The sequence spans 239 residues: tRNA (guanine-N(1)-)-methyltransferase (239 aa).

S-adenosyl-L-methionine contacts are provided by residues Gly109 and 133-138 (IGDYVL). 2 disordered regions span residues 163 to 187 (PASRHDDSHSPALDRRLEGPSYTRP) and 217 to 239 (QRTRERRPELLADPVGPQDDPGR). Composition is skewed to basic and acidic residues over residues 165–180 (SRHDDSHSPALDRRLE) and 217–226 (QRTRERRPEL).

This sequence belongs to the RNA methyltransferase TrmD family. Homodimer.

It localises to the cytoplasm. It catalyses the reaction guanosine(37) in tRNA + S-adenosyl-L-methionine = N(1)-methylguanosine(37) in tRNA + S-adenosyl-L-homocysteine + H(+). Specifically methylates guanosine-37 in various tRNAs. The polypeptide is tRNA (guanine-N(1)-)-methyltransferase (Mycolicibacterium paratuberculosis (strain ATCC BAA-968 / K-10) (Mycobacterium paratuberculosis)).